The sequence spans 540 residues: Chaperonin GroEL (540 aa).

ATP is bound by residues 29–32 (TLGP), 86–90 (DGTTT), Gly413, 476–478 (NAA), and Asp492.

This sequence belongs to the chaperonin (HSP60) family. As to quaternary structure, forms a cylinder of 14 subunits composed of two heptameric rings stacked back-to-back. Interacts with the co-chaperonin GroES.

The protein resides in the cytoplasm. It catalyses the reaction ATP + H2O + a folded polypeptide = ADP + phosphate + an unfolded polypeptide.. Functionally, together with its co-chaperonin GroES, plays an essential role in assisting protein folding. The GroEL-GroES system forms a nano-cage that allows encapsulation of the non-native substrate proteins and provides a physical environment optimized to promote and accelerate protein folding. The protein is Chaperonin GroEL of Streptococcus gordonii (strain Challis / ATCC 35105 / BCRC 15272 / CH1 / DL1 / V288).